The chain runs to 159 residues: Protransforming growth factor alpha (159 aa).

A signal peptide spans 1 to 23 (MVPAAGQLALLALGILVAVCQAL). Residues 24-38 (ENSTSPLSDSPVAAA) constitute a propeptide, removed in mature form. The Extracellular portion of the chain corresponds to 24-97 (ENSTSPLSDS…AVVAASQKKQ (74 aa)). An N-linked (GlcNAc...) asparagine glycan is attached at N25. Residues 42 to 82 (HFNKCPDSHTQYCFHGTCRFLVQEEKPACVCHSGYVGVRCE) form the EGF-like domain. Cystine bridges form between C46–C59, C54–C70, and C72–C81. The propeptide at 89 to 159 (VVAASQKKQA…TACCHSETVV (71 aa)) is removed in mature form. Residues 98-123 (AITALVVVSIVALAVLIITCVLIHCC) traverse the membrane as a helical segment. Residues 124–159 (QVRKHCEWCRALVCRHEKPSALLKGRTACCHSETVV) are Cytoplasmic-facing. Residues C152 and C153 are each lipidated (S-palmitoyl cysteine).

Interacts with the PDZ domains of MAGI3, SDCBP and SNTA1. The interaction with SDCBP, is required for the targeting to the cell surface. In the endoplasmic reticulum, in its immature form (i.e. with a prosegment and lacking full N-glycosylation), interacts with CNIH. In the Golgi apparatus, may form a complex with CNIH and GORASP2. Interacts (via cytoplasmic C-terminal domain) with NKD2.

It localises to the secreted. It is found in the extracellular space. The protein resides in the cell membrane. In terms of biological role, TGF alpha is a mitogenic polypeptide that is able to bind to the EGF receptor/EGFR and to act synergistically with TGF beta to promote anchorage-independent cell proliferation in soft agar. The protein is Protransforming growth factor alpha (Tgfa) of Rattus norvegicus (Rat).